The sequence spans 190 residues: Vascular endothelial growth factor A (190 aa).

The first 26 residues, 1-26 (MNFLLSWVHWSLALLLYLHHAKWSQA), serve as a signal peptide directing secretion. 3 disulfides stabilise this stretch: cysteine 51–cysteine 93, cysteine 82–cysteine 127, and cysteine 86–cysteine 129. An N-linked (GlcNAc...) asparagine glycan is attached at asparagine 100.

This sequence belongs to the PDGF/VEGF growth factor family. In terms of assembly, homodimer; disulfide-linked. Also found as heterodimer with PGF. Interacts with NRP1. Interacts with BSG. Interacts with CD82; this interaction inhibits VEGFA-mediated signaling pathway.

The protein localises to the secreted. Its function is as follows. Growth factor active in angiogenesis, vasculogenesis and endothelial cell growth. Induces endothelial cell proliferation, promotes cell migration, inhibits apoptosis and induces permeabilization of blood vessels. Binds to the FLT1/VEGFR1 and KDR/VEGFR2 receptors, heparan sulfate and heparin. Binding to NRP1 receptor initiates a signaling pathway needed for motor neuron axon guidance and cell body migration, including for the caudal migration of facial motor neurons from rhombomere 4 to rhombomere 6 during embryonic development. Also binds the DEAR/FBXW7-AS1 receptor. This is Vascular endothelial growth factor A (VEGFA) from Bos taurus (Bovine).